The sequence spans 150 residues: Ribosome maturation factor RimP (150 aa).

Belongs to the RimP family.

The protein localises to the cytoplasm. Functionally, required for maturation of 30S ribosomal subunits. The chain is Ribosome maturation factor RimP from Yersinia pestis bv. Antiqua (strain Antiqua).